The sequence spans 274 residues: Diaminopimelate epimerase (274 aa).

Substrate is bound by residues N11, Q44, and N64. C73 functions as the Proton donor in the catalytic mechanism. Substrate-binding positions include 74-75, N157, N190, and 208-209; these read GN and ER. Residue C217 is the Proton acceptor of the active site. 218-219 provides a ligand contact to substrate; sequence GS.

Belongs to the diaminopimelate epimerase family. In terms of assembly, homodimer.

The protein resides in the cytoplasm. It catalyses the reaction (2S,6S)-2,6-diaminopimelate = meso-2,6-diaminopimelate. Its pathway is amino-acid biosynthesis; L-lysine biosynthesis via DAP pathway; DL-2,6-diaminopimelate from LL-2,6-diaminopimelate: step 1/1. Functionally, catalyzes the stereoinversion of LL-2,6-diaminopimelate (L,L-DAP) to meso-diaminopimelate (meso-DAP), a precursor of L-lysine and an essential component of the bacterial peptidoglycan. This is Diaminopimelate epimerase from Escherichia coli O127:H6 (strain E2348/69 / EPEC).